Reading from the N-terminus, the 922-residue chain is Band 3 anion transport protein (922 aa).

2 disordered regions span residues 1–36 and 355–389; these read MEGP…TMSN and QHPD…LRTR. Residues 1 to 416 are Cytoplasmic-facing; the sequence is MEGPGQDTED…LSDIRDALNP (416 aa). The span at 10–26 shows a compositional bias: basic and acidic residues; sequence DALRRSLDPEGYEDTKG. Residues 27 to 36 are compositionally biased toward polar residues; the sequence is SRTSLGTMSN. Residues 417 to 440 form a helical membrane-spanning segment; the sequence is QCLAAVIFIYFAALSPAITFGGLL. Residues 441–448 lie on the Extracellular side of the membrane; sequence GEKTRGMM. Residues 449-469 form a helical membrane-spanning segment; the sequence is GVSELLLSTSVQCLLFSLLSA. At 470–472 the chain is on the cytoplasmic side; it reads QPL. The discontinuously helical transmembrane segment at 473-489 threads the bilayer; sequence LVVGFSGPLLVFEEAFF. The Extracellular portion of the chain corresponds to 490–498; that stretch reads RFCEDHGLE. Residues 499 to 519 form a helical membrane-spanning segment; the sequence is YIVGRVWIGFWLILLVLLVVA. Over 520 to 531 the chain is Cytoplasmic; sequence CEGTVLVRYLSR. The chain crosses the membrane as a helical span at residues 532-554; that stretch reads YTQEIFSFLISLIFIYETFAKLV. Topologically, residues 555–581 are extracellular; the sequence is TIFEAHPLQQSYDTDVSTEPSVPKPNT. The helical transmembrane segment at 582 to 602 threads the bilayer; sequence ALLSLVLMAGTFFLALFLRQF. Residues 603-613 are Cytoplasmic-facing; the sequence is KNSVFLPGKVR. A helical membrane pass occupies residues 614–634; it reads RLIGDFGVPISIFVMALADFF. Over 635-674 the chain is Extracellular; sequence IKDTYTQKLKVPRGLEVTNGTARGWFIHPMGSATPFPIWM. Residue Asn653 is glycosylated (N-linked (GlcNAc...) asparagine). Residues 675–695 traverse the membrane as a helical segment; the sequence is MFASPVPALLVFILIFLETQI. Residues 696-711 lie on the Cytoplasmic side of the membrane; the sequence is TTLIVSKPERKLVKGS. Residues 712–730 traverse the membrane as a helical segment; sequence GFHLDLLLIVAMGGLAALF. Residues 731 to 748 form a discontinuously helical membrane-spanning segment; sequence GMPWLSATTVRTITHANA. The Cytoplasmic segment spans residues 749-771; the sequence is LTVVGKSAVPGERAHIVEVKEQR. 2 helical membrane passes run 772–792 and 793–811; these read LSGL…PILK and YIPL…VTSL. The Cytoplasmic portion of the chain corresponds to 812–849; sequence FGIQLFDRILLLLMPPKYHPKEPYVTRVKTWRITSSPL. The segment at residues 850 to 880 is an intramembrane region (discontinuously helical); it reads TQILVVALLWGVKVSPASLRCPFVLVLTVPL. Residues 881–922 lie on the Cytoplasmic side of the membrane; it reads RRLLLPRIFSEIELKCLDTDDAVVTFEEAEGQDVYNEVQMPS.

This sequence belongs to the anion exchanger (TC 2.A.31) family. A dimer in solution, it spans the membrane asymmetrically and appears to be tetrameric. In terms of tissue distribution, erythrocytes.

The protein resides in the cell membrane. The protein localises to the basolateral cell membrane. The enzyme catalyses hydrogencarbonate(in) + chloride(out) = hydrogencarbonate(out) + chloride(in). In terms of biological role, functions both as a transporter that mediates electroneutral anion exchange across the cell membrane and as a structural protein. Major integral membrane glycoprotein of the erythrocyte membrane; required for normal flexibility and stability of the erythrocyte membrane and for normal erythrocyte shape via the interactions of its cytoplasmic domain with cytoskeletal proteins, glycolytic enzymes, and hemoglobin. Functions as a transporter that mediates the 1:1 exchange of inorganic anions across the erythrocyte membrane. Mediates chloride-bicarbonate exchange in the kidney, and is required for normal acidification of the urine. The chain is Band 3 anion transport protein (SLC4A1) from Gallus gallus (Chicken).